Reading from the N-terminus, the 92-residue chain is Small ribosomal subunit protein uS19 (92 aa).

The protein belongs to the universal ribosomal protein uS19 family.

Its function is as follows. Protein S19 forms a complex with S13 that binds strongly to the 16S ribosomal RNA. This Beijerinckia indica subsp. indica (strain ATCC 9039 / DSM 1715 / NCIMB 8712) protein is Small ribosomal subunit protein uS19.